The primary structure comprises 555 residues: MTRYIFITGGVVSSLGKGITSASLGAILEAQGLTVTLLKLDPYINVDPGTMSPFQHGEVFVTEDGAETDLDLGHYERFVNATMTRKNNFTTGRVYADVIRKERRGDYLGGTIQVIPHITDEIKAKIREGADGADVALVEVGGTVGDIESLPFLEAIRQMRIELGDQQTLFIHLTLVPYVAVAGEIKTKPTQHSVKELRSIGIQPDILVCRSEQPLPDAERAKIALFTNVPEPSVISLSDVKSIYEIPLILRDQGLGNRVCEKLNIKATAADLDDWKKVVQAQKNPRHTVTVAVVGKYVDLEDSYKSLSEALIHAGIHTQTRVVIEYIDSEAIELHGTELLKKVDAILVPGGFGSRGIEGKILAAQYARENGIPYFGICLGMQIAIIEFARHKAQMENANSTEFDPKTPFPVVALVSEWMAKEGIIEKRKWGDDLGGTMRLGGQPCRLKIDSLARRLYGEDRVIERHRHRYEVNNDLIGELEKKGLVISGRSIDDRLVEMIELADHPWFVGCQFHPEFTSTPRKGHPLFIGFIKAGLAAKEAKKAVLAAPSQEKTD.

The tract at residues 1–265 (MTRYIFITGG…GNRVCEKLNI (265 aa)) is amidoligase domain. S13 lines the CTP pocket. UTP is bound at residue S13. Residues 14-19 (SLGKGI) and D71 each bind ATP. Residues D71 and E139 each coordinate Mg(2+). CTP contacts are provided by residues 146–148 (DIE), 186–191 (KTKPTQ), and K222. Residues 186-191 (KTKPTQ) and K222 each bind UTP. The 252-residue stretch at 290–541 (TVAVVGKYVD…IKAGLAAKEA (252 aa)) folds into the Glutamine amidotransferase type-1 domain. G351 is an L-glutamine binding site. C378 functions as the Nucleophile; for glutamine hydrolysis in the catalytic mechanism. L-glutamine contacts are provided by residues 379 to 382 (LGMQ), E402, and R469. Active-site residues include H514 and E516.

This sequence belongs to the CTP synthase family. As to quaternary structure, homotetramer.

It carries out the reaction UTP + L-glutamine + ATP + H2O = CTP + L-glutamate + ADP + phosphate + 2 H(+). The catalysed reaction is L-glutamine + H2O = L-glutamate + NH4(+). The enzyme catalyses UTP + NH4(+) + ATP = CTP + ADP + phosphate + 2 H(+). It functions in the pathway pyrimidine metabolism; CTP biosynthesis via de novo pathway; CTP from UDP: step 2/2. Allosterically activated by GTP, when glutamine is the substrate; GTP has no effect on the reaction when ammonia is the substrate. The allosteric effector GTP functions by stabilizing the protein conformation that binds the tetrahedral intermediate(s) formed during glutamine hydrolysis. Inhibited by the product CTP, via allosteric rather than competitive inhibition. In terms of biological role, catalyzes the ATP-dependent amination of UTP to CTP with either L-glutamine or ammonia as the source of nitrogen. Regulates intracellular CTP levels through interactions with the four ribonucleotide triphosphates. In Coxiella burnetii (strain CbuG_Q212) (Coxiella burnetii (strain Q212)), this protein is CTP synthase.